Consider the following 342-residue polypeptide: Isopentenyl-diphosphate delta-isomerase (342 aa).

11–12 lines the substrate pocket; it reads RK. FMN-binding positions include Ser68, 69–71, Ser99, and Asn127; that span reads SMT. 99-101 is a substrate binding site; that stretch reads SMR. Glu163 contributes to the Mg(2+) binding site. FMN-binding positions include Lys194, Thr224, and 295-296; that span reads AG.

This sequence belongs to the IPP isomerase type 2 family. In terms of assembly, homooctamer. Dimer of tetramers. Requires FMN as cofactor. The cofactor is NADPH. It depends on Mg(2+) as a cofactor.

It is found in the cytoplasm. The enzyme catalyses isopentenyl diphosphate = dimethylallyl diphosphate. Involved in the biosynthesis of isoprenoids. Catalyzes the 1,3-allylic rearrangement of the homoallylic substrate isopentenyl (IPP) to its allylic isomer, dimethylallyl diphosphate (DMAPP). This is Isopentenyl-diphosphate delta-isomerase from Rickettsia prowazekii (strain Madrid E).